The following is a 597-amino-acid chain: Elongation factor 4 (597 aa).

The tr-type G domain maps to 2-184 (DHIRNFSIIA…ALVAKVPPPK (183 aa)). GTP-binding positions include 14–19 (DHGKST) and 131–134 (NKID).

Belongs to the TRAFAC class translation factor GTPase superfamily. Classic translation factor GTPase family. LepA subfamily.

The protein resides in the cell inner membrane. The catalysed reaction is GTP + H2O = GDP + phosphate + H(+). In terms of biological role, required for accurate and efficient protein synthesis under certain stress conditions. May act as a fidelity factor of the translation reaction, by catalyzing a one-codon backward translocation of tRNAs on improperly translocated ribosomes. Back-translocation proceeds from a post-translocation (POST) complex to a pre-translocation (PRE) complex, thus giving elongation factor G a second chance to translocate the tRNAs correctly. Binds to ribosomes in a GTP-dependent manner. The protein is Elongation factor 4 of Paraburkholderia xenovorans (strain LB400).